Here is a 116-residue protein sequence, read N- to C-terminus: Large ribosomal subunit protein uL18 (116 aa).

This sequence belongs to the universal ribosomal protein uL18 family. In terms of assembly, part of the 50S ribosomal subunit; part of the 5S rRNA/L5/L18/L25 subcomplex. Contacts the 5S and 23S rRNAs.

This is one of the proteins that bind and probably mediate the attachment of the 5S RNA into the large ribosomal subunit, where it forms part of the central protuberance. The polypeptide is Large ribosomal subunit protein uL18 (Caulobacter vibrioides (strain ATCC 19089 / CIP 103742 / CB 15) (Caulobacter crescentus)).